The chain runs to 350 residues: Beta-ketoacyl-[acyl-carrier-protein] synthase III (350 aa).

Active-site residues include C120 and H256. An ACP-binding region spans residues 257-261 (QANVR). N286 is a catalytic residue.

It belongs to the thiolase-like superfamily. FabH family. As to quaternary structure, homodimer.

It is found in the cytoplasm. The enzyme catalyses malonyl-[ACP] + acetyl-CoA + H(+) = 3-oxobutanoyl-[ACP] + CO2 + CoA. It functions in the pathway lipid metabolism; fatty acid biosynthesis. In terms of biological role, catalyzes the condensation reaction of fatty acid synthesis by the addition to an acyl acceptor of two carbons from malonyl-ACP. Catalyzes the first condensation reaction which initiates fatty acid synthesis and may therefore play a role in governing the total rate of fatty acid production. Possesses both acetoacetyl-ACP synthase and acetyl transacylase activities. Its substrate specificity determines the biosynthesis of branched-chain and/or straight-chain of fatty acids. This chain is Beta-ketoacyl-[acyl-carrier-protein] synthase III, found in Deinococcus deserti (strain DSM 17065 / CIP 109153 / LMG 22923 / VCD115).